Here is a 206-residue protein sequence, read N- to C-terminus: N-(5'-phosphoribosyl)anthranilate isomerase (206 aa).

The protein belongs to the TrpF family.

The catalysed reaction is N-(5-phospho-beta-D-ribosyl)anthranilate = 1-(2-carboxyphenylamino)-1-deoxy-D-ribulose 5-phosphate. The protein operates within amino-acid biosynthesis; L-tryptophan biosynthesis; L-tryptophan from chorismate: step 3/5. This chain is N-(5'-phosphoribosyl)anthranilate isomerase, found in Pseudomonas putida (strain ATCC 47054 / DSM 6125 / CFBP 8728 / NCIMB 11950 / KT2440).